We begin with the raw amino-acid sequence, 286 residues long: Beta-lactamase SHV-24 (286 aa).

A signal peptide spans Met-1–Ala-21. The active-site Acyl-ester intermediate is the Ser-66. Cysteines 73 and 119 form a disulfide. The active-site Proton acceptor is the Glu-164. Lys-230–Gly-232 is a binding site for substrate.

The protein belongs to the class-A beta-lactamase family.

It carries out the reaction a beta-lactam + H2O = a substituted beta-amino acid. In terms of biological role, hydrolyzes ampicillin. Can also hydrolyze cephaloridine, aztreonam and ceftazidime with a low catalytic rate. The protein is Beta-lactamase SHV-24 (bla) of Escherichia coli.